Consider the following 204-residue polypeptide: Inner membrane-spanning protein YciB (204 aa).

The next 5 membrane-spanning stretches (helical) occupy residues 48-68 (ILFA…LYFF), 73-93 (FESM…ATLM), 102-122 (WKPT…QLFT), 147-167 (GAWI…AYAF), and 170-190 (AVWV…FVVG).

It belongs to the YciB family.

The protein localises to the cell inner membrane. In terms of biological role, plays a role in cell envelope biogenesis, maintenance of cell envelope integrity and membrane homeostasis. This Nitrosococcus oceani (strain ATCC 19707 / BCRC 17464 / JCM 30415 / NCIMB 11848 / C-107) protein is Inner membrane-spanning protein YciB.